The primary structure comprises 461 residues: Bifunctional enzyme LpxC/FabZ (461 aa).

The tract at residues 1 to 302 is UDP-3-O-acyl-N-acetylglucosamine deacetylase; the sequence is MLKQKTLKDS…FARQMRKEIR (302 aa). Residues His-78, His-260, and Asp-264 each coordinate Zn(2+). The Proton donor role is filled by His-287. The 3-hydroxyacyl-[acyl-carrier-protein] dehydratase stretch occupies residues 303–461; sequence LHEIQAPTYD…EFMAQIVKNK (159 aa). The active site involves His-364.

In the N-terminal section; belongs to the LpxC family. It in the C-terminal section; belongs to the thioester dehydratase family. It depends on Zn(2+) as a cofactor.

Its subcellular location is the cytoplasm. The enzyme catalyses a UDP-3-O-[(3R)-3-hydroxyacyl]-N-acetyl-alpha-D-glucosamine + H2O = a UDP-3-O-[(3R)-3-hydroxyacyl]-alpha-D-glucosamine + acetate. It catalyses the reaction a (3R)-hydroxyacyl-[ACP] = a (2E)-enoyl-[ACP] + H2O. It participates in glycolipid biosynthesis; lipid IV(A) biosynthesis; lipid IV(A) from (3R)-3-hydroxytetradecanoyl-[acyl-carrier-protein] and UDP-N-acetyl-alpha-D-glucosamine: step 2/6. Functionally, catalyzes the hydrolysis of UDP-3-O-myristoyl-N-acetylglucosamine to form UDP-3-O-myristoylglucosamine and acetate, the committed step in lipid A biosynthesis. In terms of biological role, involved in unsaturated fatty acids biosynthesis. Catalyzes the dehydration of short chain beta-hydroxyacyl-ACPs and long chain saturated and unsaturated beta-hydroxyacyl-ACPs. The protein is Bifunctional enzyme LpxC/FabZ (lpxC/fabZ) of Bacteroides thetaiotaomicron (strain ATCC 29148 / DSM 2079 / JCM 5827 / CCUG 10774 / NCTC 10582 / VPI-5482 / E50).